The chain runs to 310 residues: Protein BIG GRAIN 1 (310 aa).

A disordered region spans residues 77-140; the sequence is SYRARAPGPH…EKKAKKPGAS (64 aa). Positions 90 to 106 are enriched in low complexity; sequence SSSSECSSYGGFSSSEA.

The protein belongs to the BIG GRAIN 1 (BG1) plant protein family. As to expression, mostly expressed in the vascular tissues of leaves, culms and young panicles, especially in hulls.

The protein resides in the cell membrane. Functionally, involved in auxin transport. Positive regulator of the auxin signaling pathway involved in gravitropism, plant growth and grain development. In Oryza sativa subsp. japonica (Rice), this protein is Protein BIG GRAIN 1.